The following is a 361-amino-acid chain: Probable mannose-1-phosphate guanylyltransferase 3 (361 aa).

Positions 6 and 7 each coordinate GDP-alpha-D-mannose. Positions 9, 11, 12, 13, and 23 each coordinate diphosphate. Gly85, Asn109, Asp111, Gly146, and Asn173 together coordinate GDP-alpha-D-mannose.

This sequence belongs to the transferase hexapeptide repeat family.

The catalysed reaction is alpha-D-mannose 1-phosphate + GTP + H(+) = GDP-alpha-D-mannose + diphosphate. It participates in nucleotide-sugar biosynthesis; GDP-alpha-D-mannose biosynthesis; GDP-alpha-D-mannose from alpha-D-mannose 1-phosphate (GTP route): step 1/1. Catalyzes a reaction of the Smirnoff-Wheeler pathway, the major route to ascorbate biosynthesis in plants. The polypeptide is Probable mannose-1-phosphate guanylyltransferase 3 (Oryza sativa subsp. japonica (Rice)).